Consider the following 521-residue polypeptide: Acidic amino acid decarboxylase GADL1 (521 aa).

Residues 1–12 (MSLLPDRERAPD) show a composition bias toward basic and acidic residues. The disordered stretch occupies residues 1–20 (MSLLPDRERAPDGDISPQEM). Lys-333 carries the N6-(pyridoxal phosphate)lysine modification.

This sequence belongs to the group II decarboxylase family. In terms of assembly, homodimer. Pyridoxal 5'-phosphate is required as a cofactor. In terms of tissue distribution, expressed at highest levels in skeletal muscles. Also detected heart, spleen and rumen.

The catalysed reaction is L-aspartate + H(+) = beta-alanine + CO2. It carries out the reaction 3-sulfino-L-alanine + H(+) = hypotaurine + CO2. It catalyses the reaction L-cysteate + H(+) = taurine + CO2. In terms of biological role, catalyzes the decarboxylation of L-aspartate, 3-sulfino-L-alanine (cysteine sulfinic acid), and L-cysteate to beta-alanine, hypotaurine and taurine, respectively. The preferred substrate is L-aspartate. Does not exhibit any decarboxylation activity toward glutamate. The sequence is that of Acidic amino acid decarboxylase GADL1 (GADL1) from Bos taurus (Bovine).